Here is a 1111-residue protein sequence, read N- to C-terminus: Kinesin-like protein KIP1 (1111 aa).

Over residues M1–T11 the composition is skewed to polar residues. A disordered region spans residues M1–M34. The Kinesin motor domain occupies N52 to I410. ATP is bound at residue G141 to T148. 4 coiled-coil regions span residues T424–N510, K648–S670, K710–I780, and H808–L828. Residues A1007–S1016 show a composition bias toward basic and acidic residues. Positions A1007–Q1111 are disordered. 2 stretches are compositionally biased toward polar residues: residues N1017–P1038 and S1057–N1082.

This sequence belongs to the TRAFAC class myosin-kinesin ATPase superfamily. Kinesin family. BimC subfamily. As to quaternary structure, might be dimeric.

The protein localises to the cytoplasm. It is found in the cytoskeleton. It localises to the spindle. Required for assembly of the mitotic spindle. Interacts with spindle microtubules to produce an outwardly directed force acting upon the poles. Following spindle assembly, CIN8 and KIP1 apparently act to oppose a force that draws separated poles back together. This force seems to be mediate by KAR3. The protein is Kinesin-like protein KIP1 (KIP1) of Saccharomyces cerevisiae (strain ATCC 204508 / S288c) (Baker's yeast).